We begin with the raw amino-acid sequence, 363 residues long: MRVVLKLGTSVLTAGTDRLHRPRLVDLLRGIAEVRAAGHEVVLVTSGAVLAGWEALGFPPRERTLAEKQLLAAVGQGRLMHLYASIADLYGMPVAQVLLTADDFRDRTRYLNARTTLEGCLTRGVLPIINENDTVAVEQIKVGDNDTLSAFVANLVEADLLVILTDAPGLYTADPRIDPTATLIPVVERVTPEVWALAGGAGSHRGTGGMHTKLQAAEIATRAGTPVVIAPGDAENALARIVRGEALGTRFLAHGSRLEARKRWILAEIATGRLLLDEGAVRAVRERGGSLLPAGITTVHGPFERGHTVRLLAPDGSEVARGLTRYRADDLKRIAGRHSRDIEAVLGFTYGPEAVHRDDLVRL.

Lys-6 contributes to the ATP binding site. Ser-46, Asp-133, and Asn-145 together coordinate substrate. ATP is bound by residues 165-166 (TD) and 207-213 (TGGMHTK). Positions 271 to 349 (TGRLLLDEGA…RDIEAVLGFT (79 aa)) constitute a PUA domain.

It belongs to the glutamate 5-kinase family.

It is found in the cytoplasm. It catalyses the reaction L-glutamate + ATP = L-glutamyl 5-phosphate + ADP. It functions in the pathway amino-acid biosynthesis; L-proline biosynthesis; L-glutamate 5-semialdehyde from L-glutamate: step 1/2. In terms of biological role, catalyzes the transfer of a phosphate group to glutamate to form L-glutamate 5-phosphate. This Deinococcus geothermalis (strain DSM 11300 / CIP 105573 / AG-3a) protein is Glutamate 5-kinase.